Here is a 386-residue protein sequence, read N- to C-terminus: Succinate--CoA ligase [ADP-forming] subunit beta (386 aa).

ATP contacts are provided by Lys-46, Glu-99, Ala-102, and Glu-107. Residues Asn-199 and Asp-213 each coordinate Mg(2+). Residues Asn-264 and 321–323 (GIM) contribute to the substrate site.

This sequence belongs to the succinate/malate CoA ligase beta subunit family. In terms of assembly, heterotetramer of two alpha and two beta subunits. Mg(2+) serves as cofactor.

The enzyme catalyses succinate + ATP + CoA = succinyl-CoA + ADP + phosphate. It catalyses the reaction GTP + succinate + CoA = succinyl-CoA + GDP + phosphate. The protein operates within carbohydrate metabolism; tricarboxylic acid cycle; succinate from succinyl-CoA (ligase route): step 1/1. Succinyl-CoA synthetase functions in the citric acid cycle (TCA), coupling the hydrolysis of succinyl-CoA to the synthesis of either ATP or GTP and thus represents the only step of substrate-level phosphorylation in the TCA. The beta subunit provides nucleotide specificity of the enzyme and binds the substrate succinate, while the binding sites for coenzyme A and phosphate are found in the alpha subunit. This chain is Succinate--CoA ligase [ADP-forming] subunit beta, found in Orientia tsutsugamushi (strain Ikeda) (Rickettsia tsutsugamushi).